A 32-amino-acid chain; its full sequence is FEVYWNVPTLQCRAVYKMIFKLNRTYGIQXNA.

A glycan (N-linked (GlcNAc...) asparagine) is linked at Asn-23.

Belongs to the glycosyl hydrolase 56 family. Expressed by the venom gland.

The protein resides in the secreted. The catalysed reaction is Random hydrolysis of (1-&gt;4)-linkages between N-acetyl-beta-D-glucosamine and D-glucuronate residues in hyaluronate.. Hydrolyzes high molecular weight hyaluronic acid to produce small oligosaccharides. In Phoneutria keyserlingi (Brazilian wandering spider), this protein is Hyaluronidase-Pk1a.